The sequence spans 199 residues: Adenylyl-sulfate kinase (199 aa).

Positions 1–21 are disordered; sequence MSQSSNITWHDSEVTKSDRQQ. The segment covering 10 to 19 has biased composition (basic and acidic residues); sequence HDSEVTKSDR. 34–41 lines the ATP pocket; it reads GLSGSGKS. Catalysis depends on S108, which acts as the Phosphoserine intermediate.

Belongs to the APS kinase family.

It carries out the reaction adenosine 5'-phosphosulfate + ATP = 3'-phosphoadenylyl sulfate + ADP + H(+). Its pathway is sulfur metabolism; hydrogen sulfide biosynthesis; sulfite from sulfate: step 2/3. Functionally, catalyzes the synthesis of activated sulfate. This is Adenylyl-sulfate kinase from Staphylococcus haemolyticus (strain JCSC1435).